The sequence spans 235 residues: Large ribosomal subunit protein uL1 (235 aa).

This sequence belongs to the universal ribosomal protein uL1 family. As to quaternary structure, part of the 50S ribosomal subunit.

Its function is as follows. Binds directly to 23S rRNA. The L1 stalk is quite mobile in the ribosome, and is involved in E site tRNA release. Protein L1 is also a translational repressor protein, it controls the translation of the L11 operon by binding to its mRNA. In Solidesulfovibrio magneticus (strain ATCC 700980 / DSM 13731 / RS-1) (Desulfovibrio magneticus), this protein is Large ribosomal subunit protein uL1.